A 754-amino-acid chain; its full sequence is Fibronectin type III domain-containing protein 1 (754 aa).

The signal sequence occupies residues 1–19 (MKSWISISFLCMLFPLSNG). Disordered regions lie at residues 40-61 (SLQGTAPTSQYPQGGTQISQGG), 85-106 (AQISQGGGQGISQGATQGTQFS), and 130-163 (AQHSQAGAQGSQFPQSAAHTAQHHQGTAQPAQSG). Low complexity predominate over residues 130-161 (AQHSQAGAQGSQFPQSAAHTAQHHQGTAQPAQ). Fibronectin type-III domains follow at residues 250 to 355 (PPQS…TPDL), 359 to 449 (APLN…TDKF), 453 to 545 (APRN…TKMD), 549 to 642 (EPMS…LPKP), and 645 to 742 (LVPN…SFPG). The segment at 731 to 754 (SNLSSQQFSFPGQQVGQQQSNPWI) is disordered.

In terms of tissue distribution, prismatic layer of shell (at protein level). Expressed primarily in the mantle with highest level in the outer epithelium of the mantle edge and lower level in the mantle pallium.

The protein localises to the secreted. The sequence is that of Fibronectin type III domain-containing protein 1 from Margaritifera margaritifera (Freshwater pearl mussel).